The primary structure comprises 1303 residues: Zinc finger CCCH domain-containing protein 4 (1303 aa).

Residues 1–33 (MEAAPGTPPPPPSESPPPPSPPPPSTPSPPPCS) show a composition bias toward pro residues. The disordered stretch occupies residues 1–388 (MEAAPGTPPP…RDHDKPHQQS (388 aa)). Residues 53–73 (DREDGELEEGELEDDGAEETQ) are compositionally biased toward acidic residues. A phosphothreonine mark is found at T72 and T75. Phosphoserine occurs at positions 76, 92, and 94. Residues 80 to 99 (ERSRKEKGEKHHSDSDEEKS) show a composition bias toward basic and acidic residues. Residues 95 to 128 (DEEKSHRRLKRKRKKEREKEKRRSKKRRKSKHKR) adopt a coiled-coil conformation. Basic residues predominate over residues 100–130 (HRRLKRKRKKEREKEKRRSKKRRKSKHKRHA). The span at 135-144 (DFSDFSDDSD) shows a compositional bias: acidic residues. A Phosphotyrosine modification is found at Y155. Positions 194 to 218 (EDYENEQYGEYEGDEEEDMGKEDYD) are enriched in acidic residues. The segment covering 219 to 235 (DFTKELNQYRRAKEGSS) has biased composition (basic and acidic residues). Basic residues predominate over residues 238 to 251 (RGSRGRGRGYRGRG). The segment covering 252–274 (SRGGSRGRGMGRGSRGRGRGSMG) has biased composition (gly residues). The span at 278–304 (PEDEEDFYEEEMDYGESEEPMGDDDYD) shows a compositional bias: acidic residues. Basic and acidic residues predominate over residues 305–321 (EYSKELNQYRRSKDSRG). The span at 323-346 (GLSRGRGRGSRGRGKGMGRGRGRG) shows a compositional bias: basic residues. The span at 358-369 (NDDEDFYDEDMG) shows a compositional bias: acidic residues. Positions 377-388 (RSRDHDKPHQQS) are enriched in basic and acidic residues. 3 C3H1-type zinc fingers span residues 390 to 417 (KKGKVICKYFVEGRCTWGDHCNFSHDIE), 419 to 446 (PKKRELCKFYITGFCARAENCPYMHGDF), and 447 to 470 (PCKLYHTTGNCINGDDCMFSHDPL). Residues 486–496 (AEAGAEDEKEV) are compositionally biased toward acidic residues. A disordered region spans residues 486–571 (AEAGAEDEKE…HEPLSPQQLQ (86 aa)). Pro residues-rich tracts occupy residues 507-529 (LPKPPPGVGLLPTPPRPPGPQAP) and 539-558 (GGPPPPPPPPPPPPGPPQMP). R601 is subject to Asymmetric dimethylarginine. Residues 605-624 (PGGPPGPMGPGPNMGPPGPM) are compositionally biased toward pro residues. Disordered regions lie at residues 605-685 (PGGP…SGMM), 710-955 (GLLG…PRSQ), and 996-1288 (PPVP…ASLK). Over residues 630 to 650 (PDMHPDMHPDMHPDMHADMHA) the composition is skewed to basic and acidic residues. Pro residues predominate over residues 659-673 (NPGPPMGPGGPPMMP). Basic and acidic residues-rich tracts occupy residues 717–739 (DYGHYEELPGEPGEHLFPEHPLE) and 782–795 (ERARRLAESSKQDR). A coiled-coil region spans residues 767–800 (RALYLRIQQKQQEEEERARRLAESSKQDRENEEG). 2 positions are modified to phosphoserine: S807 and S808. The span at 815–843 (SSVTSILKTLRQQTSSRPPASVGELSSSG) shows a compositional bias: polar residues. Basic and acidic residues predominate over residues 860 to 875 (ADPRLSRDPRLTRHVE). Phosphoserine is present on residues S904, S907, and S908. Low complexity predominate over residues 904 to 918 (SLHSSPVGPSSSKGS). 2 stretches are compositionally biased toward polar residues: residues 1028 to 1038 (GASTDSSTQGA) and 1053 to 1062 (VNATGSSAAP). Positions 1067 to 1084 (KPSDPRVRKAPTDPRLQK) are enriched in basic and acidic residues. Over residues 1097 to 1110 (PGPAEAPSPTASPS) the composition is skewed to low complexity. Phosphoserine is present on S1104. At T1106 the chain carries Phosphothreonine. Residues S1108, S1110, and S1114 each carry the phosphoserine modification. At T1118 the chain carries Phosphothreonine. Residues 1129 to 1139 (GGLGQGGGGGQ) are compositionally biased toward gly residues. Positions 1224–1234 (KAAAAPAATTA) are enriched in low complexity. Pro residues predominate over residues 1235 to 1245 (TPPPEGAPPQP). Over residues 1259–1268 (VKQTPKTGSG) the composition is skewed to polar residues. Residues S1269 and S1275 each carry the phosphoserine modification.

This sequence belongs to the suppressor of sable family. Interacts with WDR82.

The protein resides in the chromosome. RNA-binding protein that suppresses transcription of long non-coding RNAs (lncRNAs). LncRNAs are defined as transcripts more than 200 nucleotides that are not translated into protein. Together with WDR82, part of a transcription termination checkpoint that promotes transcription termination of lncRNAs and their subsequent degradation by the exosome. The transcription termination checkpoint is activated by the inefficiently spliced first exon of lncRNAs. The protein is Zinc finger CCCH domain-containing protein 4 of Homo sapiens (Human).